The chain runs to 213 residues: uncharacterized protein (213 aa).

3 helical membrane passes run 26-46, 112-132, and 136-156; these read FINF…GLKV, ASYI…AGIW, and AGLA…SFLI.

The protein resides in the cell membrane. This is an uncharacterized protein from Haemophilus influenzae (strain ATCC 51907 / DSM 11121 / KW20 / Rd).